A 454-amino-acid polypeptide reads, in one-letter code: MYCRRSHLKKPSMSHRTHDYWIAHQGTPLHGVLSIPGDKSISHRAVMFAALADGTSRIDGFLEAEDTCSTAEILARLGVRIETPLSTQRIVHGVGVDGLQASHIPLDCGNAGTGMRLLAGLLVAQPFDSVLVGDASLSKRPMRRVTDPLSQMGARIDTSDDGTPPLRIYGGQLLHGIDFISPVASAQIKSAVLLAGLYARNETVVREPHPTRDYTERMLTAFGVDIDVSTGCARLRGGQRLCATDITIPADFSSAAFYLVAASVIPGSDITLRAVGLNPRRIGLLTVLRLMGANIVESNRHEQGGEPVVDLRVRYAPLQGTRVPEDLVADMIDEFPALFVAAAAAEGQTVVSGAAELRVKESDRLAAMVTGLRVLGVQVDETADGATIHGGPIGHGTINSHGDHRIAMAFSIAGQLSVSTVRIEDVANVATSFPDYETLARSAGFGLEVYCDPA.

Residues K39, S40, and R44 each coordinate 3-phosphoshikimate. K39 is a phosphoenolpyruvate binding site. The phosphoenolpyruvate site is built by G112 and R140. Residues S185, Q187, D333, and K360 each contribute to the 3-phosphoshikimate site. Q187 lines the phosphoenolpyruvate pocket. The active-site Proton acceptor is the D333. Phosphoenolpyruvate is bound by residues R364 and R405.

It belongs to the EPSP synthase family. Monomer.

The protein resides in the cytoplasm. The catalysed reaction is 3-phosphoshikimate + phosphoenolpyruvate = 5-O-(1-carboxyvinyl)-3-phosphoshikimate + phosphate. It functions in the pathway metabolic intermediate biosynthesis; chorismate biosynthesis; chorismate from D-erythrose 4-phosphate and phosphoenolpyruvate: step 6/7. Functionally, catalyzes the transfer of the enolpyruvyl moiety of phosphoenolpyruvate (PEP) to the 5-hydroxyl of shikimate-3-phosphate (S3P) to produce enolpyruvyl shikimate-3-phosphate and inorganic phosphate. This Xylella fastidiosa (strain 9a5c) protein is 3-phosphoshikimate 1-carboxyvinyltransferase.